The sequence spans 362 residues: Serine/threonine-protein kinase SRK2E (362 aa).

4 positions are modified to phosphoserine; by autocatalysis: Ser7, Ser18, Ser29, and Ser43. Positions 21–277 (YELVKDIGSG…IPEIRNHEWF (257 aa)) constitute a Protein kinase domain. 27-35 (IGSGNFGVA) serves as a coordination point for ATP. An ATP-binding site is contributed by Lys50. The active-site Proton acceptor is the Asp140. The activation loop stretch occupies residues 160-186 (DFGYSKSSVLHSQPKSTVGTPAYIAPE). Ser175 carries the phosphoserine modification. The tract at residues 283–318 (ADLMNDNTMTTQFDESDQPGQSIEEIMQIIAEATVP) is domain I; osmotic stress response, required for the kinase activity. A domain II; ABA response and ABI1 binding region spans residues 319–362 (PAGTQNLNHYLTGSLDIDDDMEEDLESDLDDLDIDSSGEIVYAM).

Belongs to the protein kinase superfamily. Ser/Thr protein kinase family. Interacts with ABI1, PP2CA and SLAC1. Interacts with B'ALPHA, B'BETA, B'DELTA, PP2AA2, PP2AA3, PP2A1 and PP2A2. Associates with MAPKKK18 within the nucleus. Interacts with I-2, TOPP1 and TOPP2. Interacts with ABI2. In terms of processing, autophosphorylation on residues Ser-7, Ser-18, Ser-29, Ser-43, Ser-175 and/or Thr-176. Only the phosphorylation of Ser-175 is crucial for the kinase activity. The phosphorylation of Ser-43 may repress the ABA signaling pathway in absence of ABA. Expressed in seedlings, leaves, flowers, stems, and roots, but restricted to guard cells and vascular tissue.

Its subcellular location is the nucleus. It catalyses the reaction L-seryl-[protein] + ATP = O-phospho-L-seryl-[protein] + ADP + H(+). The enzyme catalyses L-threonyl-[protein] + ATP = O-phospho-L-threonyl-[protein] + ADP + H(+). With respect to regulation, kinase activity enhanced by ABA and low humidity. Repressed by PP2CA independently of its phosphatase activity. Probably inactivated by ABI1. Repressed by TOPP1. Negatively regulated by ABI2. In terms of biological role, activator of the abscisic acid (ABA) signaling pathway that regulates numerous ABA responses, such as stomata closure in response to drought, darkness, high CO(2), plant pathogens, or decreases in atmospheric relative humidity (RH). Involved in the resistance to drought by avoiding water loss. Required for the stomata closure mediated by pathogen-associated molecular pattern (PAMPs) (e.g. flg22 and LPS) of pathogenic bacteria such as P.syringae pv. tomato (Pst) and E.coli O157:H7. As a plant defense process, stomata are closed transiently in order to limit invaders, but actively reopened by bacteria after a few hours; virulent strains (e.g. Pst DC3000) are more efficient than avirulent strains (e.g. Pst DC3000 AvrRpt2) in reopening stomata. Mediates the phosphorylation and activation of the S-type anion efflux channel SLAC1, and thus promotes stomata closure. Essential for stomatal closure in response to reactive oxygen species (ROS). Promotes MAPKKK18 activity upon abscisic acid (ABA) treatment. The protein is Serine/threonine-protein kinase SRK2E of Arabidopsis thaliana (Mouse-ear cress).